The primary structure comprises 78 residues: Small ribosomal subunit protein uS17 (78 aa).

Belongs to the universal ribosomal protein uS17 family. In terms of assembly, part of the 30S ribosomal subunit.

One of the primary rRNA binding proteins, it binds specifically to the 5'-end of 16S ribosomal RNA. The chain is Small ribosomal subunit protein uS17 from Allorhizobium ampelinum (strain ATCC BAA-846 / DSM 112012 / S4) (Agrobacterium vitis (strain S4)).